A 60-amino-acid chain; its full sequence is Large ribosomal subunit protein bL32 (60 aa).

The tract at residues 1-44 (MAVQQNKKSRSARDMRRSHDALEASTLSVEKTTGEVHLRHHVSP) is disordered. Residues 11 to 22 (SARDMRRSHDAL) show a composition bias toward basic and acidic residues.

This sequence belongs to the bacterial ribosomal protein bL32 family.

The chain is Large ribosomal subunit protein bL32 from Pseudomonas fluorescens (strain SBW25).